Here is a 344-residue protein sequence, read N- to C-terminus: Chalcone synthase A (344 aa).

C167 is a catalytic residue.

It belongs to the thiolase-like superfamily. Chalcone/stilbene synthases family.

It carries out the reaction (E)-4-coumaroyl-CoA + 3 malonyl-CoA + 3 H(+) = 2',4,4',6'-tetrahydroxychalcone + 3 CO2 + 4 CoA. Its pathway is secondary metabolite biosynthesis; flavonoid biosynthesis. In terms of biological role, the primary product of this enzyme is 4,2',4',6'-tetrahydroxychalcone (also termed naringenin-chalcone or chalcone) which can under specific conditions spontaneously isomerize into naringenin. The protein is Chalcone synthase A (CHSA) of Ipomoea nil (Japanese morning glory).